Consider the following 210-residue polypeptide: Orotate phosphoribosyltransferase (210 aa).

Residues Arg94, Lys98, His100, and 120 to 128 (EDLISTGGS) contribute to the 5-phospho-alpha-D-ribose 1-diphosphate site. Ser124 serves as a coordination point for orotate.

It belongs to the purine/pyrimidine phosphoribosyltransferase family. PyrE subfamily. As to quaternary structure, homodimer. The cofactor is Mg(2+).

The enzyme catalyses orotidine 5'-phosphate + diphosphate = orotate + 5-phospho-alpha-D-ribose 1-diphosphate. The protein operates within pyrimidine metabolism; UMP biosynthesis via de novo pathway; UMP from orotate: step 1/2. Its function is as follows. Catalyzes the transfer of a ribosyl phosphate group from 5-phosphoribose 1-diphosphate to orotate, leading to the formation of orotidine monophosphate (OMP). This is Orotate phosphoribosyltransferase from Bacillus cereus (strain ATCC 10987 / NRS 248).